The primary structure comprises 850 residues: Protein STB2 (850 aa).

Phosphoserine occurs at positions 594 and 625.

This sequence to yeast STB6. In terms of assembly, interacts with SIN3.

The polypeptide is Protein STB2 (STB2) (Saccharomyces cerevisiae (strain ATCC 204508 / S288c) (Baker's yeast)).